A 315-amino-acid chain; its full sequence is Protein TIFY 4B (315 aa).

Residues 113-145 are disordered; that stretch reads CHRRDSPRSAEFSGSSGQFVADKDSHKTVSVSP. In terms of domain architecture, Tify spans 151 to 186; it reads TNAVVGQMTIFYSGKVNVYDGVPPEKARSIMHFAAN. The Jas signature appears at 233–260; the sequence is QANRKVSLQRYLEKRKDRRFSKTKKAPG. The Nuclear localization signal motif lies at 235–242; that stretch reads NRKVSLQR. Residues 248 to 257 show a composition bias toward basic residues; the sequence is KDRRFSKTKK. The segment at 248 to 315 is disordered; the sequence is KDRRFSKTKK…LNSDLNSEDN (68 aa). Positions 293–315 are enriched in polar residues; the sequence is PENQTKSPNISVDLNSDLNSEDN.

The protein belongs to the TIFY/JAZ family. Interacts with AFPH2/NINJA.

The protein localises to the nucleus. Its function is as follows. Regulates the arrest of dispersed meristematic cells during lamina development. The polypeptide is Protein TIFY 4B (TIFY4B) (Arabidopsis thaliana (Mouse-ear cress)).